The chain runs to 326 residues: Beta-ketoacyl-[acyl-carrier-protein] synthase III (326 aa).

Active-site residues include cysteine 116 and histidine 253. Positions 254 to 258 (QANIR) are ACP-binding. Asparagine 283 is an active-site residue.

The protein belongs to the thiolase-like superfamily. FabH family. Homodimer.

Its subcellular location is the cytoplasm. It carries out the reaction malonyl-[ACP] + acetyl-CoA + H(+) = 3-oxobutanoyl-[ACP] + CO2 + CoA. The protein operates within lipid metabolism; fatty acid biosynthesis. Its function is as follows. Catalyzes the condensation reaction of fatty acid synthesis by the addition to an acyl acceptor of two carbons from malonyl-ACP. Catalyzes the first condensation reaction which initiates fatty acid synthesis and may therefore play a role in governing the total rate of fatty acid production. Possesses both acetoacetyl-ACP synthase and acetyl transacylase activities. Its substrate specificity determines the biosynthesis of branched-chain and/or straight-chain of fatty acids. The chain is Beta-ketoacyl-[acyl-carrier-protein] synthase III from Jannaschia sp. (strain CCS1).